Reading from the N-terminus, the 907-residue chain is MTSINTANINFKWDPKSLEIRTLAVERLLEPLVTQVTTLVNSSNKGPSNKKKGRSKKAHVLAASVDEATQNFLEKGEKIAKESQFLKEELTAAVEDVRKQGESMKMASGEFAEDPCSSVKRGNMVRAARALLSAVTHLLVLADMADVYQLLLQLKLVEENLMKVRNAGTEQDLGIQYKALKPEVDKLNMMAAKRQQELKDVHHKDQMAAARGVLQRNVPMLYTASRACLQHPDVAAYKANRDLIYKQLQHAVSGISNAAQATSSEDSSFSQTAGGGELAYALNNFDKQIIVDPLSFSEERFRPSLEERLESIISGAALMADSSCTRDDRRERIVAECNSVRQALQDLLSEYMGNAGRKEKSDALNTAIDRMTKKTRDLRRQLRKAVMDHVSDSFLETNVPLLVLIEAAKNGNEKEVKEYAQVFREHANKLIEVANLACSISNNEEGVKLVRMAASQLETLCPQVINAALALAAKPNSKVAQDNMDLFKDQWEKQVRVLTDAVDDITSIDDFLCVSENHILEDVNKCVIALQEKDVDGLDRTAGAIRGRAARVVHVVTSEMDNYMPGVYTEKVLEATKLLTETVMPRFTEQVEAAVEALSANNGQPVDENEFIDASRLVYDGVRDIRKAVLMIRTPEELDDSDFETEDFDSRSRTSVQTEDDQLIAGQSARAIMAQLPQEQKAKIAEQVASFQEEKSKLDAEVSKWDDSGNDIIVLAKQMCMIMMEMTDFTRGKGPLKNTSDVISAAKKIAEAGSRMDKLGRAIADQCPDSACKQDLLAYLQRIALFCHQLNICSKVKAEVQNLGGELVVSGLDSAMSLIQAAKNLMNSVVSTVKASYVASTKYQKSQDMQSLNMPAISWKMKAPEKKPLVKREKLDDGQTNKVKRSSQKKHINPVQALSEFKAMDSI.

A compositionally biased stretch (basic and acidic residues) spans 870 to 879 (VKREKLDDGQ). The disordered stretch occupies residues 870-895 (VKREKLDDGQTNKVKRSSQKKHINPV). Residues 882–892 (KVKRSSQKKHI) show a composition bias toward basic residues.

Belongs to the vinculin/alpha-catenin family. Interacts with ctnnb1, jupa and cdh2. Interacts with cdh1 during early stages of oogenesis, interaction is no longer present when oocyte develops into the unfertilized egg. In terms of tissue distribution, expressed in the skin (at protein level). Expressed in the ovary.

It is found in the cell junction. The protein localises to the adherens junction. It localises to the cytoplasm. The protein resides in the cytoskeleton. Its subcellular location is the cell membrane. It is found in the nucleus. Its function is as follows. Associates with the cytoplasmic domain of a variety of cadherins, forming catenin and cadherin complexes which are further linked to the actin filament network and is thereby involved in cell-cell adhesion. Required for embryonic development, via maintenance of adherens junctions that facilitate the maintenance of the epithelial barrier. The protein is Catenin alpha-1 of Danio rerio (Zebrafish).